The primary structure comprises 658 residues: Protein translocase subunit SecA 3 (658 aa).

ATP contacts are provided by residues Q111, 129–133, and D536; that span reads GEGKT.

Belongs to the SecA family. In terms of assembly, monomer and homodimer. Part of the essential Sec protein translocation apparatus which comprises SecA, SecYEG and auxiliary proteins SecDF-YajC and YidC.

It localises to the cell inner membrane. The protein resides in the cytoplasm. The catalysed reaction is ATP + H2O + cellular proteinSide 1 = ADP + phosphate + cellular proteinSide 2.. In terms of biological role, part of the Sec protein translocase complex. Interacts with the SecYEG preprotein conducting channel. Has a central role in coupling the hydrolysis of ATP to the transfer of proteins into and across the cell membrane, serving both as a receptor for the preprotein-SecB complex and as an ATP-driven molecular motor driving the stepwise translocation of polypeptide chains across the membrane. This chain is Protein translocase subunit SecA 3, found in Magnetococcus marinus (strain ATCC BAA-1437 / JCM 17883 / MC-1).